Reading from the N-terminus, the 122-residue chain is Large ribosomal subunit protein uL18 (122 aa).

Belongs to the universal ribosomal protein uL18 family. As to quaternary structure, part of the 50S ribosomal subunit; part of the 5S rRNA/L5/L18/L25 subcomplex. Contacts the 5S and 23S rRNAs.

This is one of the proteins that bind and probably mediate the attachment of the 5S RNA into the large ribosomal subunit, where it forms part of the central protuberance. This is Large ribosomal subunit protein uL18 from Prochlorococcus marinus (strain MIT 9215).